The primary structure comprises 206 residues: Cytidylate kinase (206 aa).

ATP is bound at residue 7 to 15; the sequence is GPAASGKGT.

This sequence belongs to the cytidylate kinase family. Type 1 subfamily.

It is found in the cytoplasm. It carries out the reaction CMP + ATP = CDP + ADP. The enzyme catalyses dCMP + ATP = dCDP + ADP. The sequence is that of Cytidylate kinase from Azorhizobium caulinodans (strain ATCC 43989 / DSM 5975 / JCM 20966 / LMG 6465 / NBRC 14845 / NCIMB 13405 / ORS 571).